The primary structure comprises 750 residues: K(+)-insensitive pyrophosphate-energized proton pump (750 aa).

A run of 5 helical transmembrane segments spans residues 1-21 (MYGL…YQGI), 51-71 (FIII…GGLN), 78-98 (VVFI…VAWF), 133-153 (IGML…LFIP), and 161-181 (FIGF…AGGI). Residue Lys-184 coordinates substrate. 3 residues coordinate Mg(2+): Asp-187, Asp-191, and Asp-216. 6 helical membrane passes run 227-247 (DGFE…LLAI), 257-277 (LVWI…SYWV), 301-321 (LVWL…YMLI), 327-347 (GTMW…GALI), 391-411 (WMGL…TLGL), and 420-440 (VFAF…TIAV). Residue Asp-448 coordinates Mg(2+). The next 4 membrane-spanning stretches (helical) occupy residues 503-523 (VLIG…IMIL), 538-558 (ILWP…YWFT), 607-627 (GMIN…CLES), and 629-649 (LFIG…IFMA). Residues Asp-656, Asp-681, and Asp-685 each contribute to the Ca(2+) site. A substrate-binding site is contributed by Lys-688. 2 helical membrane passes run 694–714 (ALNP…ELAI) and 716–736 (LPTT…LVFV).

Belongs to the H(+)-translocating pyrophosphatase (TC 3.A.10) family. K(+)-insensitive subfamily. In terms of assembly, homodimer. Mg(2+) is required as a cofactor.

It is found in the cell inner membrane. It carries out the reaction diphosphate + H2O + H(+)(in) = 2 phosphate + 2 H(+)(out). In terms of biological role, proton pump that utilizes the energy of pyrophosphate hydrolysis as the driving force for proton movement across the membrane. Generates a proton motive force. This Chlorobaculum tepidum (strain ATCC 49652 / DSM 12025 / NBRC 103806 / TLS) (Chlorobium tepidum) protein is K(+)-insensitive pyrophosphate-energized proton pump.